Here is a 281-residue protein sequence, read N- to C-terminus: TIP41-like protein (281 aa).

Belongs to the TIP41 family.

In Caenorhabditis elegans, this protein is TIP41-like protein.